The primary structure comprises 369 residues: N-methyltransferase imqF (369 aa).

It belongs to the methyltransferase superfamily.

The protein operates within secondary metabolite biosynthesis. N-methyltransferase; part of the gene cluster that mediates the biosynthesis of imizoquins A to D, tripeptide-derived alkaloids that serve a protective role against oxidative stress that are essential for normal germination. ImqB is a canonical three-module NRPS that assembles the tripeptide backbone of the imizoquins via condensation of Trp, Tyr, and Leu-derived precursors. N-methylation by imqF and phenol oxidation by imqC, followed by cyclization via the FAD-dependent oxidase imqH carry out the three-step transformation of L-tyrosine into tetrahydroisoquinoline. Importantly, this sequence requires the presence of a free amine in the tyrosine moiety, indicating that isoquinoline formation occurs prior to peptide bond formation. The imidazolidin-4-one ring of imizoquins could form following additional oxidation of the methyl-derived bridgehead carbon by imqH. Lastly, O-methylation by imqG and leucine hydroxylation by imqE complete biosynthesis of the imizoquins. The sequence is that of N-methyltransferase imqF from Aspergillus flavus (strain ATCC 200026 / FGSC A1120 / IAM 13836 / NRRL 3357 / JCM 12722 / SRRC 167).